Here is a 472-residue protein sequence, read N- to C-terminus: ATP synthase subunit beta (472 aa).

160 to 167 (GGAGVGKT) serves as a coordination point for ATP.

This sequence belongs to the ATPase alpha/beta chains family. F-type ATPases have 2 components, CF(1) - the catalytic core - and CF(0) - the membrane proton channel. CF(1) has five subunits: alpha(3), beta(3), gamma(1), delta(1), epsilon(1). CF(0) has three main subunits: a(1), b(2) and c(9-12). The alpha and beta chains form an alternating ring which encloses part of the gamma chain. CF(1) is attached to CF(0) by a central stalk formed by the gamma and epsilon chains, while a peripheral stalk is formed by the delta and b chains.

The protein localises to the cell membrane. It catalyses the reaction ATP + H2O + 4 H(+)(in) = ADP + phosphate + 5 H(+)(out). In terms of biological role, produces ATP from ADP in the presence of a proton gradient across the membrane. The catalytic sites are hosted primarily by the beta subunits. The chain is ATP synthase subunit beta from Lachnoclostridium phytofermentans (strain ATCC 700394 / DSM 18823 / ISDg) (Clostridium phytofermentans).